A 675-amino-acid polypeptide reads, in one-letter code: Glycerophosphocholine phosphodiesterase GPCPD1 (675 aa).

In terms of domain architecture, CBM20 spans 1 to 115; the sequence is MTPSQVTFEI…IIIDDGQFGI (115 aa). Residues Arg-70 and 88–89 each bind substrate; that span reads HK. Ser-178 and Ser-427 each carry phosphoserine. In terms of domain architecture, GP-PDE spans 321–621; that stretch reads PLDVGHRGAG…DRIYDWMPEQ (301 aa). Residue Tyr-611 is modified to Phosphotyrosine.

Belongs to the glycerophosphoryl diester phosphodiesterase family. Widely expressed with highest levels in skeletal muscle and heart.

Its subcellular location is the cytoplasm. It localises to the cytosol. It catalyses the reaction sn-glycerol 3-phosphocholine + H2O = sn-glycerol 3-phosphate + choline + H(+). Functionally, may be involved in the negative regulation of skeletal muscle differentiation, independently of its glycerophosphocholine phosphodiesterase activity. The protein is Glycerophosphocholine phosphodiesterase GPCPD1 (Gpcpd1) of Mus musculus (Mouse).